The primary structure comprises 78 residues: MSDIAERVKKIVAEHLGVEPEKVTENASFIDDLGADSLDTVELVMAFEEAFNTEIPDDAAETILTVGDAIKFLEKNAG.

The 76-residue stretch at 2–77 (SDIAERVKKI…DAIKFLEKNA (76 aa)) folds into the Carrier domain. Serine 37 is subject to O-(pantetheine 4'-phosphoryl)serine.

This sequence belongs to the acyl carrier protein (ACP) family. 4'-phosphopantetheine is transferred from CoA to a specific serine of apo-ACP by AcpS. This modification is essential for activity because fatty acids are bound in thioester linkage to the sulfhydryl of the prosthetic group.

Its subcellular location is the cytoplasm. Its pathway is lipid metabolism; fatty acid biosynthesis. Its function is as follows. Carrier of the growing fatty acid chain in fatty acid biosynthesis. This is Acyl carrier protein from Azorhizobium caulinodans (strain ATCC 43989 / DSM 5975 / JCM 20966 / LMG 6465 / NBRC 14845 / NCIMB 13405 / ORS 571).